Here is a 538-residue protein sequence, read N- to C-terminus: RNA-binding protein RO60 (538 aa).

M1 carries the N-acetylmethionine modification. 2 positions are modified to phosphoserine: S4 and S19. A TROVE domain is found at 16–369 (IANSQDGYVW…TFKTVEPTGK (354 aa)). The tract at residues 120 to 284 (RIPTHLFTFI…EMPLTALLRN (165 aa)) is RNA-binding. An N6-acetyllysine mark is found at K224 and K359. The interval 361–538 (FKTVEPTGKR…VIRNFTLDMI (178 aa)) is VWFA-like domain. Positions 378, 380, and 445 each coordinate a divalent metal cation.

This sequence belongs to the Ro 60 kDa family. Identified in a IGF2BP1-dependent mRNP granule complex containing untranslated mRNAs. Found in a complex with PUF60 and Y5 RNA. Interacts with RAB11FIP5.

It localises to the cytoplasm. RNA-binding protein that binds to misfolded non-coding RNAs, pre-5S rRNA, and several small cytoplasmic RNA molecules known as Y RNAs. Binds to endogenous Alu retroelements which are induced by type I interferon and stimulate porinflammatory cytokine secretion. Regulates the expression of Alu retroelements as well as inflammatory genes. May play roles in cilia formation and/or maintenance. This chain is RNA-binding protein RO60, found in Homo sapiens (Human).